The chain runs to 452 residues: GTPase Der (452 aa).

EngA-type G domains lie at 9 to 170 (KIIA…PEED) and 185 to 362 (LQIV…KTWN). Residues 15–22 (GRPNVGKS), 62–66 (DTPGF), 124–127 (NKCE), 191–198 (GRPNAGKS), 238–242 (DTAGL), and 303–306 (NKWD) contribute to the GTP site. A KH-like domain is found at 363–448 (KKITTSKLNE…PIRFNYIKTK (86 aa)).

The protein belongs to the TRAFAC class TrmE-Era-EngA-EngB-Septin-like GTPase superfamily. EngA (Der) GTPase family. As to quaternary structure, associates with the 50S ribosomal subunit.

GTPase that plays an essential role in the late steps of ribosome biogenesis. The protein is GTPase Der of Rickettsia bellii (strain OSU 85-389).